The sequence spans 229 residues: 3-dehydroquinate dehydratase (229 aa).

3-dehydroquinate is bound by residues 33-35 (EWR) and Arg-65. His-121 serves as the catalytic Proton donor/acceptor. Lys-146 functions as the Schiff-base intermediate with substrate in the catalytic mechanism. Positions 188, 207, and 211 each coordinate 3-dehydroquinate.

It belongs to the type-I 3-dehydroquinase family. Homodimer.

It carries out the reaction 3-dehydroquinate = 3-dehydroshikimate + H2O. The protein operates within metabolic intermediate biosynthesis; chorismate biosynthesis; chorismate from D-erythrose 4-phosphate and phosphoenolpyruvate: step 3/7. Functionally, involved in the third step of the chorismate pathway, which leads to the biosynthesis of aromatic amino acids. Catalyzes the cis-dehydration of 3-dehydroquinate (DHQ) and introduces the first double bond of the aromatic ring to yield 3-dehydroshikimate. This is 3-dehydroquinate dehydratase from Lactococcus lactis subsp. cremoris (strain MG1363).